Here is a 101-residue protein sequence, read N- to C-terminus: UPF0235 protein MmarC5_0538 (101 aa).

Belongs to the UPF0235 family.

The polypeptide is UPF0235 protein MmarC5_0538 (Methanococcus maripaludis (strain C5 / ATCC BAA-1333)).